The chain runs to 552 residues: HTH-type transcriptional regulator SgrR (552 aa).

Residues 1–116 (MPSARLQQQF…LVSHLGRSFR (116 aa)) enclose the HTH marR-type domain. Residues 26-49 (LNELAALLSCSRRHMRTLLNTMQD) constitute a DNA-binding region (H-T-H motif). A solute-binding region spans residues 163–492 (ELEADIAHHW…IDWQADAARW (330 aa)).

Activates the small RNA gene sgrS under glucose-phosphate stress conditions as well as yfdZ. Represses its own transcription under both stress and non-stress conditions. Might act as a sensor of the intracellular accumulation of phosphoglucose by binding these molecules in its C-terminal solute-binding domain. The sequence is that of HTH-type transcriptional regulator SgrR from Shigella dysenteriae serotype 1 (strain Sd197).